We begin with the raw amino-acid sequence, 298 residues long: Aspartate carbamoyltransferase catalytic subunit (298 aa).

The carbamoyl phosphate site is built by Arg-50 and Thr-51. Lys-79 contacts L-aspartate. Residues Arg-100, His-128, and Gln-131 each contribute to the carbamoyl phosphate site. Positions 161 and 220 each coordinate L-aspartate. Leu-259 and Pro-260 together coordinate carbamoyl phosphate.

Belongs to the aspartate/ornithine carbamoyltransferase superfamily. ATCase family. Heterooligomer of catalytic and regulatory chains.

The enzyme catalyses carbamoyl phosphate + L-aspartate = N-carbamoyl-L-aspartate + phosphate + H(+). It participates in pyrimidine metabolism; UMP biosynthesis via de novo pathway; (S)-dihydroorotate from bicarbonate: step 2/3. Functionally, catalyzes the condensation of carbamoyl phosphate and aspartate to form carbamoyl aspartate and inorganic phosphate, the committed step in the de novo pyrimidine nucleotide biosynthesis pathway. This chain is Aspartate carbamoyltransferase catalytic subunit, found in Sulfurisphaera tokodaii (strain DSM 16993 / JCM 10545 / NBRC 100140 / 7) (Sulfolobus tokodaii).